A 161-amino-acid polypeptide reads, in one-letter code: Lipoprotein signal peptidase (161 aa).

The next 3 membrane-spanning stretches (helical) occupy residues 9-29, 63-83, and 88-108; these read ISLLMTIIVLVFDQVSKWLIT, KMLFFYIITIIILIVLVIFYI, and FNLFMQVAISLLFAGALGNFI. Residues aspartate 118 and aspartate 136 contribute to the active site. The helical transmembrane segment at 131-151 threads the bilayer; that stretch reads IFNIADSSLTIGVIFVIIALI.

It belongs to the peptidase A8 family.

It is found in the cell membrane. It catalyses the reaction Release of signal peptides from bacterial membrane prolipoproteins. Hydrolyzes -Xaa-Yaa-Zaa-|-(S,diacylglyceryl)Cys-, in which Xaa is hydrophobic (preferably Leu), and Yaa (Ala or Ser) and Zaa (Gly or Ala) have small, neutral side chains.. It participates in protein modification; lipoprotein biosynthesis (signal peptide cleavage). Its function is as follows. This protein specifically catalyzes the removal of signal peptides from prolipoproteins. This chain is Lipoprotein signal peptidase, found in Staphylococcus epidermidis (strain ATCC 12228 / FDA PCI 1200).